The sequence spans 100 residues: uncharacterized protein (100 aa).

An HTH arsR-type domain is found at 8 to 100; sequence MKQSDDQIRA…TYLPGFLETL (93 aa). The segment at residues 44 to 67 is a DNA-binding region (H-T-H motif); that stretch reads CGEVGEKCNIVKTTASYHFKTLRE.

This is an uncharacterized protein from Bacillus subtilis (strain 168).